Consider the following 140-residue polypeptide: Biopolymer transport protein exbD1 (140 aa).

The Cytoplasmic portion of the chain corresponds to 1 to 16; that stretch reads MAFSSGNSGGPMADIN. A helical transmembrane segment spans residues 17–37; the sequence is VTPLVDVMLVLLIIFIITAPL. Residues 38–140 lie on the Periplasmic side of the membrane; it reads MSHKVKVELP…GFVATKEKGQ (103 aa).

It belongs to the ExbD/TolR family. The accessory proteins ExbB and ExbD seem to form a complex with TonB.

Its subcellular location is the cell inner membrane. Its function is as follows. Involved in the TonB-dependent energy-dependent transport of various receptor-bound substrates. The chain is Biopolymer transport protein exbD1 (exbD1) from Xanthomonas campestris pv. campestris (strain B100).